The chain runs to 393 residues: tRNA (guanine-N(7)-)-methyltransferase (393 aa).

E124, E149, and D176 together coordinate S-adenosyl-L-methionine. D232 is a binding site for substrate.

It belongs to the class I-like SAM-binding methyltransferase superfamily. TrmB family.

It catalyses the reaction guanosine(46) in tRNA + S-adenosyl-L-methionine = N(7)-methylguanosine(46) in tRNA + S-adenosyl-L-homocysteine. It participates in tRNA modification; N(7)-methylguanine-tRNA biosynthesis. Catalyzes the formation of N(7)-methylguanine at position 46 (m7G46) in tRNA. This Helicobacter pylori (strain ATCC 700392 / 26695) (Campylobacter pylori) protein is tRNA (guanine-N(7)-)-methyltransferase.